The following is a 188-amino-acid chain: MRVMGVDPGLTRCGLSVVENGRGSQVVALDVDVVRTPSDAPVSKRLLAVSDVVEHWLDAHHPDVMAIERVFSQQNVSTVMGTAQAGGVIALAAARRGIDVHFHTPSEVKAAVTGNGAANKAQVTAMVTRILALQAKPTPADAADALALAICHCWRAPMIARMAEAEALGARHRQAYRAKVAGEVKATR.

Residues Asp-7, Glu-68, and Asp-141 contribute to the active site. The Mg(2+) site is built by Asp-7, Glu-68, and Asp-141.

The protein belongs to the RuvC family. Homodimer which binds Holliday junction (HJ) DNA. The HJ becomes 2-fold symmetrical on binding to RuvC with unstacked arms; it has a different conformation from HJ DNA in complex with RuvA. In the full resolvosome a probable DNA-RuvA(4)-RuvB(12)-RuvC(2) complex forms which resolves the HJ. Mg(2+) serves as cofactor.

The protein localises to the cytoplasm. The catalysed reaction is Endonucleolytic cleavage at a junction such as a reciprocal single-stranded crossover between two homologous DNA duplexes (Holliday junction).. Functionally, the RuvA-RuvB-RuvC complex processes Holliday junction (HJ) DNA during genetic recombination and DNA repair. Endonuclease that resolves HJ intermediates. Cleaves cruciform DNA by making single-stranded nicks across the HJ at symmetrical positions within the homologous arms, yielding a 5'-phosphate and a 3'-hydroxyl group; requires a central core of homology in the junction. The consensus cleavage sequence is 5'-(A/T)TT(C/G)-3'. Cleavage occurs on the 3'-side of the TT dinucleotide at the point of strand exchange. HJ branch migration catalyzed by RuvA-RuvB allows RuvC to scan DNA until it finds its consensus sequence, where it cleaves and resolves the cruciform DNA. This chain is Crossover junction endodeoxyribonuclease RuvC, found in Mycobacterium leprae (strain TN).